Reading from the N-terminus, the 201-residue chain is Small ribosomal subunit protein uS4 (201 aa).

Positions serine 91 to glutamate 151 constitute an S4 RNA-binding domain.

The protein belongs to the universal ribosomal protein uS4 family. Part of the 30S ribosomal subunit. Contacts protein S5. The interaction surface between S4 and S5 is involved in control of translational fidelity.

One of the primary rRNA binding proteins, it binds directly to 16S rRNA where it nucleates assembly of the body of the 30S subunit. Functionally, with S5 and S12 plays an important role in translational accuracy. In Corynebacterium jeikeium (strain K411), this protein is Small ribosomal subunit protein uS4.